Consider the following 364-residue polypeptide: DNA replication and repair protein RecF (364 aa).

30–37 (GNNAQGKT) is a binding site for ATP.

Belongs to the RecF family.

The protein localises to the cytoplasm. The RecF protein is involved in DNA metabolism; it is required for DNA replication and normal SOS inducibility. RecF binds preferentially to single-stranded, linear DNA. It also seems to bind ATP. This Clostridium botulinum (strain ATCC 19397 / Type A) protein is DNA replication and repair protein RecF.